A 288-amino-acid chain; its full sequence is Urease accessory protein UreD (288 aa).

The protein belongs to the UreD family. UreD, UreF and UreG form a complex that acts as a GTP-hydrolysis-dependent molecular chaperone, activating the urease apoprotein by helping to assemble the nickel containing metallocenter of UreC. The UreE protein probably delivers the nickel.

It localises to the cytoplasm. Its function is as follows. Required for maturation of urease via the functional incorporation of the urease nickel metallocenter. The sequence is that of Urease accessory protein UreD from Dechloromonas aromatica (strain RCB).